The following is a 212-amino-acid chain: Leucine efflux protein (212 aa).

The next 6 membrane-spanning stretches (helical) occupy residues 5–25, 49–69, 81–101, 122–142, 153–173, and 188–208; these read FGVLNYLTYLVGAVFIILVPG, GVFIGDAVLMFLAFAGVATLI, YLGAIYLLWLGGKMLYAVLTQ, TLSLTNPKAILFYVSFFVQFI, FFILALTLEVISFCYMSFLIL, and LAKLGNSLIGLVFVGFAARLA.

It belongs to the Rht family.

The protein localises to the cell inner membrane. The catalysed reaction is L-leucine(in) + H(+)(out) = L-leucine(out) + H(+)(in). In terms of biological role, exporter of leucine. This Klebsiella pneumoniae subsp. pneumoniae (strain ATCC 700721 / MGH 78578) protein is Leucine efflux protein (leuE).